A 397-amino-acid chain; its full sequence is uncharacterized protein (397 aa).

The next 12 helical transmembrane spans lie at 5–25 (LKIL…LWPL), 43–63 (LVLM…GFLF), 69–89 (FKSI…LVFF), 92–112 (WPAY…VFPA), 131–151 (AIYV…GVVA), 157–177 (YVFL…YFGF), 202–222 (FAAL…YSQW), 233–253 (IGIS…LIVL), 269–289 (LKAQ…MLLT), 293–313 (FPMF…VWPA), 333–353 (FVNS…GVLV), and 360–380 (ALVL…LLYD).

This sequence belongs to the major facilitator superfamily.

It is found in the cell membrane. This is an uncharacterized protein from Bacillus subtilis (strain 168).